Consider the following 634-residue polypeptide: Phospholipase B (634 aa).

An N-terminal signal peptide occupies residues 1 to 19 (MSIITTAFALSLLATTAFA). A PLA2c domain is found at 46-569 (DCPSNVTWIR…DTWCWAGDDN (524 aa)). Residues Asn50, Asn56, Asn122, Asn231, Asn246, Asn269, Asn311, Asn340, Asn384, Asn430, Asn478, Asn498, Asn525, Asn550, Asn569, Asn591, and Asn603 are each glycosylated (N-linked (GlcNAc...) asparagine).

This sequence belongs to the lysophospholipase family. N-glycosylated.

Its subcellular location is the secreted. The enzyme catalyses a 1-acyl-sn-glycero-3-phosphocholine + H2O = sn-glycerol 3-phosphocholine + a fatty acid + H(+). Its function is as follows. Exhibits phospholipase B (PLB), lysophospholipase (LPL) and lysophospholipase/transacylase (LPTA) activities. This Cryptococcus neoformans var. neoformans serotype D (strain JEC21 / ATCC MYA-565) (Filobasidiella neoformans) protein is Phospholipase B (PLB1).